Consider the following 192-residue polypeptide: Thymidine kinase (192 aa).

ATP contacts are provided by residues 9 to 16 (GAMNSGKT) and 85 to 88 (DEAQ). The Proton acceptor role is filled by Glu-86. Residues Cys-143, Cys-146, Cys-180, and His-183 each contribute to the Zn(2+) site.

This sequence belongs to the thymidine kinase family. Homotetramer.

Its subcellular location is the cytoplasm. The catalysed reaction is thymidine + ATP = dTMP + ADP + H(+). This is Thymidine kinase from Lactiplantibacillus plantarum (strain ATCC BAA-793 / NCIMB 8826 / WCFS1) (Lactobacillus plantarum).